The sequence spans 237 residues: Purine nucleoside phosphorylase DeoD-type (237 aa).

His5 lines the a purine D-ribonucleoside pocket. Phosphate is bound by residues Gly21, Arg25, Arg44, and 88-91; that span reads RVGS. Residues 180 to 182 and 204 to 205 contribute to the a purine D-ribonucleoside site; these read EME and SD. The Proton donor role is filled by Asp205.

The protein belongs to the PNP/UDP phosphorylase family. In terms of assembly, homohexamer; trimer of homodimers.

The catalysed reaction is a purine D-ribonucleoside + phosphate = a purine nucleobase + alpha-D-ribose 1-phosphate. It catalyses the reaction a purine 2'-deoxy-D-ribonucleoside + phosphate = a purine nucleobase + 2-deoxy-alpha-D-ribose 1-phosphate. Catalyzes the reversible phosphorolytic breakdown of the N-glycosidic bond in the beta-(deoxy)ribonucleoside molecules, with the formation of the corresponding free purine bases and pentose-1-phosphate. The polypeptide is Purine nucleoside phosphorylase DeoD-type (Edwardsiella ictaluri (strain 93-146)).